We begin with the raw amino-acid sequence, 44 residues long: Photosystem I reaction center subunit IX (44 aa).

The chain crosses the membrane as a helical span at residues tyrosine 7–isoleucine 27.

It belongs to the PsaJ family.

It is found in the plastid. Its subcellular location is the chloroplast thylakoid membrane. Functionally, may help in the organization of the PsaE and PsaF subunits. In Pinus thunbergii (Japanese black pine), this protein is Photosystem I reaction center subunit IX.